A 161-amino-acid polypeptide reads, in one-letter code: Nucleotide-binding protein XAC3671 (161 aa).

This sequence belongs to the YajQ family.

Functionally, nucleotide-binding protein. This is Nucleotide-binding protein XAC3671 from Xanthomonas axonopodis pv. citri (strain 306).